The following is a 201-amino-acid chain: Holliday junction branch migration complex subunit RuvA (201 aa).

The tract at residues 1-61 (MIEFVKGTID…EDAFSLYGFS (61 aa)) is domain I. The domain II stretch occupies residues 62-140 (TREEKALFTK…DVVPEMIDNL (79 aa)). The flexible linker stretch occupies residues 141 to 150 (FNHEARIEKQ). The domain III stretch occupies residues 151–201 (EAETALDEALEALRVLGYAEKEIKKVLPHLKEETALSTDQYVKKALQKLLK).

The protein belongs to the RuvA family. As to quaternary structure, homotetramer. Forms an RuvA(8)-RuvB(12)-Holliday junction (HJ) complex. HJ DNA is sandwiched between 2 RuvA tetramers; dsDNA enters through RuvA and exits via RuvB. An RuvB hexamer assembles on each DNA strand where it exits the tetramer. Each RuvB hexamer is contacted by two RuvA subunits (via domain III) on 2 adjacent RuvB subunits; this complex drives branch migration. In the full resolvosome a probable DNA-RuvA(4)-RuvB(12)-RuvC(2) complex forms which resolves the HJ.

Its subcellular location is the cytoplasm. In terms of biological role, the RuvA-RuvB-RuvC complex processes Holliday junction (HJ) DNA during genetic recombination and DNA repair, while the RuvA-RuvB complex plays an important role in the rescue of blocked DNA replication forks via replication fork reversal (RFR). RuvA specifically binds to HJ cruciform DNA, conferring on it an open structure. The RuvB hexamer acts as an ATP-dependent pump, pulling dsDNA into and through the RuvAB complex. HJ branch migration allows RuvC to scan DNA until it finds its consensus sequence, where it cleaves and resolves the cruciform DNA. The sequence is that of Holliday junction branch migration complex subunit RuvA from Bacillus velezensis (strain DSM 23117 / BGSC 10A6 / LMG 26770 / FZB42) (Bacillus amyloliquefaciens subsp. plantarum).